A 449-amino-acid polypeptide reads, in one-letter code: Exodeoxyribonuclease 7 large subunit (449 aa).

Belongs to the XseA family. In terms of assembly, heterooligomer composed of large and small subunits.

The protein resides in the cytoplasm. It carries out the reaction Exonucleolytic cleavage in either 5'- to 3'- or 3'- to 5'-direction to yield nucleoside 5'-phosphates.. Bidirectionally degrades single-stranded DNA into large acid-insoluble oligonucleotides, which are then degraded further into small acid-soluble oligonucleotides. This chain is Exodeoxyribonuclease 7 large subunit, found in Salmonella dublin (strain CT_02021853).